We begin with the raw amino-acid sequence, 101 residues long: NADH-quinone oxidoreductase subunit K (101 aa).

The next 3 membrane-spanning stretches (helical) occupy residues 2 to 22 (ISLN…LVGV), 29 to 49 (IMLF…LVAI), and 63 to 83 (MFII…LILW).

Belongs to the complex I subunit 4L family. NDH-1 is composed of 14 different subunits. Subunits NuoA, H, J, K, L, M, N constitute the membrane sector of the complex.

The protein resides in the cell inner membrane. It catalyses the reaction a quinone + NADH + 5 H(+)(in) = a quinol + NAD(+) + 4 H(+)(out). In terms of biological role, NDH-1 shuttles electrons from NADH, via FMN and iron-sulfur (Fe-S) centers, to quinones in the respiratory chain. The immediate electron acceptor for the enzyme in this species is believed to be ubiquinone. Couples the redox reaction to proton translocation (for every two electrons transferred, four hydrogen ions are translocated across the cytoplasmic membrane), and thus conserves the redox energy in a proton gradient. The protein is NADH-quinone oxidoreductase subunit K of Campylobacter hominis (strain ATCC BAA-381 / DSM 21671 / CCUG 45161 / LMG 19568 / NCTC 13146 / CH001A).